We begin with the raw amino-acid sequence, 264 residues long: Ribonuclease H (264 aa).

Residues 55–88 (GSRYSSSSGPYRRSTTSYGYSPYSSSSSNYSARH) are disordered. Over residues 56–85 (SRYSSSSGPYRRSTTSYGYSPYSSSSSNYS) the composition is skewed to low complexity. Ser97 is modified (phosphoserine). The RNase H type-1 domain maps to 120-263 (CSDRQVVYAD…ADMLARRGAS (144 aa)). Positions 129, 171, 191, and 255 each coordinate Mg(2+).

The protein belongs to the RNase H family. Requires Mg(2+) as cofactor.

It carries out the reaction Endonucleolytic cleavage to 5'-phosphomonoester.. Functionally, endonuclease that specifically degrades the RNA of RNA-DNA hybrids. This Schizosaccharomyces pombe (strain 972 / ATCC 24843) (Fission yeast) protein is Ribonuclease H (rnh1).